The sequence spans 238 residues: MRTLFVGDLHLSADRPDITQAFLTFLETQLTDTSALYILGDLFEVWVGDDIAEPFANQLADAIKLASKKLPIYFIHGNRDFLIGERFAQRSGMTLLPEVYKLDLYGTTTVLLHGDSLCTLDKPYQRFRKFRNLSWAKWIYNHLPKSKRLNIAAKLRSKSQSSNQHKSYSIMDVEPSAVLELLDNTNAQQMIHGHTHRPAIHQLSNGKRRIVVGDWYEQGSMLCISQDNVELIELPFGK.

Asp-8, His-10, Asp-41, Asn-78, and His-113 together coordinate Mn(2+). 78 to 79 (NR) lines the substrate pocket. Substrate is bound by residues Asp-121, Ser-159, Asn-163, Lys-166, and His-194. Residues His-194 and His-196 each contribute to the Mn(2+) site.

This sequence belongs to the LpxH family. It depends on Mn(2+) as a cofactor.

The protein localises to the cell inner membrane. The catalysed reaction is UDP-2-N,3-O-bis[(3R)-3-hydroxytetradecanoyl]-alpha-D-glucosamine + H2O = 2-N,3-O-bis[(3R)-3-hydroxytetradecanoyl]-alpha-D-glucosaminyl 1-phosphate + UMP + 2 H(+). Its pathway is glycolipid biosynthesis; lipid IV(A) biosynthesis; lipid IV(A) from (3R)-3-hydroxytetradecanoyl-[acyl-carrier-protein] and UDP-N-acetyl-alpha-D-glucosamine: step 4/6. In terms of biological role, hydrolyzes the pyrophosphate bond of UDP-2,3-diacylglucosamine to yield 2,3-diacylglucosamine 1-phosphate (lipid X) and UMP by catalyzing the attack of water at the alpha-P atom. Involved in the biosynthesis of lipid A, a phosphorylated glycolipid that anchors the lipopolysaccharide to the outer membrane of the cell. The polypeptide is UDP-2,3-diacylglucosamine hydrolase (Shewanella piezotolerans (strain WP3 / JCM 13877)).